We begin with the raw amino-acid sequence, 321 residues long: Fructose-1,6-bisphosphatase class 1 (321 aa).

Mg(2+) contacts are provided by glutamate 93, aspartate 114, leucine 116, and aspartate 117. Residues 117 to 120 (DGSS), asparagine 205, tyrosine 233, and lysine 263 each bind substrate. Glutamate 269 lines the Mg(2+) pocket.

It belongs to the FBPase class 1 family. In terms of assembly, homotetramer. Mg(2+) is required as a cofactor.

It is found in the cytoplasm. It carries out the reaction beta-D-fructose 1,6-bisphosphate + H2O = beta-D-fructose 6-phosphate + phosphate. Its pathway is carbohydrate biosynthesis; gluconeogenesis. This chain is Fructose-1,6-bisphosphatase class 1, found in Persephonella marina (strain DSM 14350 / EX-H1).